Here is a 578-residue protein sequence, read N- to C-terminus: Protein O-linked-mannose beta-1,4-N-acetylglucosaminyltransferase 2 (578 aa).

Residues 1–4 are Cytoplasmic-facing; that stretch reads MNIS. A helical; Signal-anchor for type II membrane protein membrane pass occupies residues 5–25; the sequence is AVFSALLVSIMAAVLWKHVKL. Residues 26–578 are Lumenal-facing; that stretch reads LDQFYVIEEE…PFAEVLVCST (553 aa). Asn98, Asn275, Asn335, Asn451, Asn541, and Asn563 each carry an N-linked (GlcNAc...) asparagine glycan. The 95-residue stretch at 484 to 578 folds into the Fibronectin type-III domain; it reads RESKCQASAQ…PFAEVLVCST (95 aa).

The protein belongs to the glycosyltransferase 61 family.

The protein resides in the endoplasmic reticulum membrane. The enzyme catalyses 3-O-(alpha-D-mannosyl)-L-threonyl-[protein] + UDP-N-acetyl-alpha-D-glucosamine = 3-O-(N-acetyl-beta-D-glucosaminyl-(1-&gt;4)-alpha-D-mannosyl)-L-threonyl-[protein] + UDP + H(+). The protein operates within protein modification; protein glycosylation. Functionally, O-linked mannose beta-1,4-N-acetylglucosaminyltransferase that transfers UDP-N-acetyl-D-glucosamine to the 4-position of the mannose to generate N-acetyl-D-glucosamine-beta-1,4-O-D-mannosylprotein. Involved in the biosynthesis of the phosphorylated O-mannosyl trisaccharide (N-acetylgalactosamine-beta-3-N-acetylglucosamine-beta-4-(phosphate-6-)mannose), a carbohydrate structure present in alpha-dystroglycan (DAG1), which is required for binding laminin G-like domain-containing extracellular proteins with high affinity. The polypeptide is Protein O-linked-mannose beta-1,4-N-acetylglucosaminyltransferase 2 (pomgnt2) (Xenopus laevis (African clawed frog)).